The primary structure comprises 518 residues: Probable cytosol aminopeptidase (518 aa).

Mn(2+)-binding residues include Lys270 and Asp275. Lys282 is an active-site residue. Residues Asp293, Asp352, and Glu354 each contribute to the Mn(2+) site. The active site involves Arg356. Residues 495 to 507 (SRTTRQPGSTGET) are compositionally biased toward polar residues. The interval 495–518 (SRTTRQPGSTGETGSRKNRRKSKE) is disordered.

Belongs to the peptidase M17 family. Requires Mn(2+) as cofactor.

It localises to the cytoplasm. The enzyme catalyses Release of an N-terminal amino acid, Xaa-|-Yaa-, in which Xaa is preferably Leu, but may be other amino acids including Pro although not Arg or Lys, and Yaa may be Pro. Amino acid amides and methyl esters are also readily hydrolyzed, but rates on arylamides are exceedingly low.. It catalyses the reaction Release of an N-terminal amino acid, preferentially leucine, but not glutamic or aspartic acids.. Functionally, presumably involved in the processing and regular turnover of intracellular proteins. Catalyzes the removal of unsubstituted N-terminal amino acids from various peptides. The polypeptide is Probable cytosol aminopeptidase (Nitrosospira multiformis (strain ATCC 25196 / NCIMB 11849 / C 71)).